Consider the following 229-residue polypeptide: UPF0128 protein aq_756 (229 aa).

It belongs to the UPF0128 family.

This chain is UPF0128 protein aq_756, found in Aquifex aeolicus (strain VF5).